A 310-amino-acid polypeptide reads, in one-letter code: MKFERGLEKLNIEFLKDKPLKDFTTFKIGGKARYIVFPKNIDELIEIIKLVKESGINWRIVGNCSNVLVSDKGFDGAIITTTKMDFFKTEENLIEAECGCMISQVARKACENGLKGLEFAVGIPGTVGGAVYMNAGAYDSEIKDVFECAEVLDEDLNIFKLGKSDMRFSYRHSRLKEEKLILLKATFRLQYAREEDVPPIEKANEYNQRRREKQPLQYPSAGSIFKRPPGNFAGKLIEDAGLKGYRVGNACISGKHAGFIVNLGDALAEDVRKLIYHTQKSVYEKFGVLLEPEIEFIGEFETPLFEMSTK.

Residues 27 to 192 (KIGGKARYIV…LKATFRLQYA (166 aa)) enclose the FAD-binding PCMH-type domain. The active site involves Arg-171. Ser-223 serves as the catalytic Proton donor. Glu-293 is a catalytic residue.

Belongs to the MurB family. Requires FAD as cofactor.

The protein resides in the cytoplasm. The catalysed reaction is UDP-N-acetyl-alpha-D-muramate + NADP(+) = UDP-N-acetyl-3-O-(1-carboxyvinyl)-alpha-D-glucosamine + NADPH + H(+). The protein operates within cell wall biogenesis; peptidoglycan biosynthesis. Its function is as follows. Cell wall formation. This chain is UDP-N-acetylenolpyruvoylglucosamine reductase, found in Caldicellulosiruptor saccharolyticus (strain ATCC 43494 / DSM 8903 / Tp8T 6331).